Consider the following 81-residue polypeptide: Photosystem I iron-sulfur center (81 aa).

4Fe-4S ferredoxin-type domains follow at residues 2-31 (SHAVKIYDTCIGCTQCVRACPLDVLEMVPW) and 39-68 (IASSPRTEDCVGCKRCETACPTDFLSIRVY). C11, C14, C17, C21, C48, C51, C54, and C58 together coordinate [4Fe-4S] cluster.

As to quaternary structure, the cyanobacterial PSI reaction center is composed of one copy each of PsaA,B,C,D,E,F,I,J,K,L,M and X, and forms trimeric complexes. [4Fe-4S] cluster is required as a cofactor.

The protein resides in the cellular thylakoid membrane. The catalysed reaction is reduced [plastocyanin] + hnu + oxidized [2Fe-2S]-[ferredoxin] = oxidized [plastocyanin] + reduced [2Fe-2S]-[ferredoxin]. Apoprotein for the two 4Fe-4S centers FA and FB of photosystem I (PSI); essential for photochemical activity. FB is the terminal electron acceptor of PSI, donating electrons to ferredoxin. The C-terminus interacts with PsaA/B/D and helps assemble the protein into the PSI complex. Required for binding of PsaD and PsaE to PSI. PSI is a plastocyanin/cytochrome c6-ferredoxin oxidoreductase, converting photonic excitation into a charge separation, which transfers an electron from the donor P700 chlorophyll pair to the spectroscopically characterized acceptors A0, A1, FX, FA and FB in turn. This Prochlorococcus marinus (strain NATL2A) protein is Photosystem I iron-sulfur center.